A 790-amino-acid chain; its full sequence is MFAPANQTHFSLRIENLRHDFQVLAFRGREAISQPFRFDLELVSERSDLDLDALLHQPAFLILSPSGQGVHGQLTSIAQGDSGKRLTGYRATLEPRLAYLGLCSDQRIFQRLSVPEIIGRVLEGHGILADAYRFQLGPTPYPAREYCTQYDETDLAFLSRLCEEEGIHYHHEFSAQGHVLVFGDDQTSFPRLQRPVAYVQDAGLVADQPVVKRFGVRFDTRASRVTRRDYDFEQPALQMQAAHGPQPGAQQPDLEDYDYPGRFTHRERGKHLSHRALERHRADYLQARGESDEPALLSGHFLTLSAHPRGEWNDLWLLTEVLHEGRQPQVLEESIDSDVAQGQGDFRQGYRNHFVATPWSAHFRPPLEHPRPRVLGCQTAVVTGPAGETIHCDQYGRVKVQFFWDRLGQADDNTSCWLRVASNWGGKRYGGVAIPRVGMEVLVGFLEGDPDQPLVTGCLYHSENRVPYELPQNKTRSVFKTDSYPGGGGFNELRIEDRKGQEQIFVHAQRDWDENIEHDQKIRVGHERHDTVEGDSYSEFRAEEQRTVHADRKVELKAADHLSVADALHLRIGTGQFVEAGDEIHFKAGDKVVIEAGMELTLKGGGSFARLDPGGVTLDGAQVMINSGGSPGIGSGVRALSPLQPLAADAAAAGGALLGAIAQKIGEAPQKLLRFELSPLPGVASAARQPYRLYANGAFKEEGIADEGGAISFEPLPGERTYRIETANGHAYEVEMVDQPDALQADDRLAQQGFRDYRAEMPQHKPRSAPDAYRRDASRPGAADKDEPTP.

Composition is skewed to basic and acidic residues over residues 753-763 (GFRDYRAEMPQ) and 772-790 (AYRR…EPTP). Residues 753 to 790 (GFRDYRAEMPQHKPRSAPDAYRRDASRPGAADKDEPTP) form a disordered region.

This sequence belongs to the VgrG protein family.

The protein resides in the secreted. Part of the H2 type VI secretion system (H2-T6SS) specialized secretion system, which delivers several virulence factors in both prokaryotic and eukaryotic cells during infection. Allows the delivery of the phospholipase effector PldB to target cells where it exerts its toxicity. Also plays a role in VgrG4b and its effector PldA secretion. The protein is Type VI secretion system spike protein VgrG5 of Pseudomonas aeruginosa (strain ATCC 15692 / DSM 22644 / CIP 104116 / JCM 14847 / LMG 12228 / 1C / PRS 101 / PAO1).